The sequence spans 196 residues: Calcineurin B homologous protein 2 (196 aa).

A lipid anchor (N-myristoyl glycine) is attached at G2. EF-hand domains lie at 26–61 (ASLLRLYHRFQALDRDEKGFLSRLDLQQIGALAVNP), 71–106 (FPNGSQRLYFAGFARVLAYFRPIDEEDATLRDPKQP), 111–146 (SRMNKLRFAFQLYDLDRDGKISRNEMLQVLRLMVGV), and 152–187 (QLESITDRTVQEADEDGDGAVSFLEFTKSLEKMNIE). S27 carries the post-translational modification Phosphoserine. Residues D124, D126, D128, K130, and E135 each contribute to the Ca(2+) site. Positions 137-148 (LQVLRLMVGVQV) match the Nuclear export signal motif. Ca(2+) contacts are provided by D165, D167, D169, and E176.

Belongs to the calcineurin regulatory subunit family. CHP subfamily. As to quaternary structure, interacts with PPP3CA. Interacts with SLC9A1/NHE1; the interaction occurs in a calcium-dependent manner. Interacts with SLC9A1/NHE1.

The protein localises to the cytoplasm. The protein resides in the nucleus. It localises to the cell membrane. Functions as an integral cofactor in cell pH regulation by controlling plasma membrane-type Na(+)/H(+) exchange activity. Binds to and activates SLC9A1/NHE1 in a serum-independent manner, thus increasing pH and protecting cells from serum deprivation-induced death. Also plays a role in the regulation of cell proliferation and tumor growth by increasing the phosphatase activity of PPP3CA in a calcium-dependent manner. Activator of the calcineurin/NFAT signaling pathway. Involved in the cytoplasmic translocation of the transcription factor NFATC3 to the nucleus. This is Calcineurin B homologous protein 2 (Chp2) from Mus musculus (Mouse).